The sequence spans 295 residues: Nucleotide-binding protein RD1_1380 (295 aa).

Residue 16–23 participates in ATP binding; the sequence is GPSGAGRS. 63 to 66 contributes to the GTP binding site; the sequence is DPRN.

Belongs to the RapZ-like family.

Displays ATPase and GTPase activities. The chain is Nucleotide-binding protein RD1_1380 from Roseobacter denitrificans (strain ATCC 33942 / OCh 114) (Erythrobacter sp. (strain OCh 114)).